Consider the following 180-residue polypeptide: Shikimate kinase (180 aa).

14 to 19 (GAGKSC) is a binding site for ATP. Serine 18 lines the Mg(2+) pocket. Substrate-binding residues include aspartate 36, arginine 60, and glycine 82. ATP is bound at residue arginine 120. Arginine 139 is a substrate binding site.

This sequence belongs to the shikimate kinase family. In terms of assembly, monomer. Requires Mg(2+) as cofactor.

It localises to the cytoplasm. The enzyme catalyses shikimate + ATP = 3-phosphoshikimate + ADP + H(+). It participates in metabolic intermediate biosynthesis; chorismate biosynthesis; chorismate from D-erythrose 4-phosphate and phosphoenolpyruvate: step 5/7. Its function is as follows. Catalyzes the specific phosphorylation of the 3-hydroxyl group of shikimic acid using ATP as a cosubstrate. This Xanthomonas oryzae pv. oryzae (strain PXO99A) protein is Shikimate kinase.